Consider the following 631-residue polypeptide: UvrABC system protein C (631 aa).

Residues 26–105 (SSPGVYQFKN…IKELKPRYNV (80 aa)) form the GIY-YIG domain. Residues 219–254 (SATIRSLNERMLSFAKELKFEQAAELKTQIDSLKRY) enclose the UVR domain.

The protein belongs to the UvrC family. In terms of assembly, interacts with UvrB in an incision complex.

The protein resides in the cytoplasm. Functionally, the UvrABC repair system catalyzes the recognition and processing of DNA lesions. UvrC both incises the 5' and 3' sides of the lesion. The N-terminal half is responsible for the 3' incision and the C-terminal half is responsible for the 5' incision. The sequence is that of UvrABC system protein C from Chlorobium phaeobacteroides (strain DSM 266 / SMG 266 / 2430).